The following is a 197-amino-acid chain: dITP/XTP pyrophosphatase (197 aa).

8–13 (TGNPGK) provides a ligand contact to substrate. Residues glutamate 40 and aspartate 69 each coordinate Mg(2+). Residue aspartate 69 is the Proton acceptor of the active site. Residues serine 70, 154-157 (FGYD), lysine 177, and 182-183 (HR) contribute to the substrate site.

Belongs to the HAM1 NTPase family. As to quaternary structure, homodimer. Mg(2+) serves as cofactor.

It catalyses the reaction XTP + H2O = XMP + diphosphate + H(+). It carries out the reaction dITP + H2O = dIMP + diphosphate + H(+). The catalysed reaction is ITP + H2O = IMP + diphosphate + H(+). In terms of biological role, pyrophosphatase that catalyzes the hydrolysis of nucleoside triphosphates to their monophosphate derivatives, with a high preference for the non-canonical purine nucleotides XTP (xanthosine triphosphate), dITP (deoxyinosine triphosphate) and ITP. Seems to function as a house-cleaning enzyme that removes non-canonical purine nucleotides from the nucleotide pool, thus preventing their incorporation into DNA/RNA and avoiding chromosomal lesions. This chain is dITP/XTP pyrophosphatase, found in Yersinia pseudotuberculosis serotype I (strain IP32953).